Consider the following 480-residue polypeptide: Protein nucleotidyltransferase YdiU (480 aa).

Positions 86, 88, 89, 109, 121, 122, 172, and 179 each coordinate ATP. Asp-248 acts as the Proton acceptor in catalysis. 2 residues coordinate Mg(2+): Asn-249 and Asp-258. Position 258 (Asp-258) interacts with ATP.

This sequence belongs to the SELO family. The cofactor is Mg(2+). Requires Mn(2+) as cofactor.

The enzyme catalyses L-seryl-[protein] + ATP = 3-O-(5'-adenylyl)-L-seryl-[protein] + diphosphate. It carries out the reaction L-threonyl-[protein] + ATP = 3-O-(5'-adenylyl)-L-threonyl-[protein] + diphosphate. It catalyses the reaction L-tyrosyl-[protein] + ATP = O-(5'-adenylyl)-L-tyrosyl-[protein] + diphosphate. The catalysed reaction is L-histidyl-[protein] + UTP = N(tele)-(5'-uridylyl)-L-histidyl-[protein] + diphosphate. The enzyme catalyses L-seryl-[protein] + UTP = O-(5'-uridylyl)-L-seryl-[protein] + diphosphate. It carries out the reaction L-tyrosyl-[protein] + UTP = O-(5'-uridylyl)-L-tyrosyl-[protein] + diphosphate. Its function is as follows. Nucleotidyltransferase involved in the post-translational modification of proteins. It can catalyze the addition of adenosine monophosphate (AMP) or uridine monophosphate (UMP) to a protein, resulting in modifications known as AMPylation and UMPylation. The protein is Protein nucleotidyltransferase YdiU of Salmonella arizonae (strain ATCC BAA-731 / CDC346-86 / RSK2980).